Consider the following 383-residue polypeptide: Succinyl-diaminopimelate desuccinylase (383 aa).

Residue H73 coordinates Zn(2+). Residue D75 is part of the active site. D107 lines the Zn(2+) pocket. E141 functions as the Proton acceptor in the catalytic mechanism. Residues E142, E170, and H356 each contribute to the Zn(2+) site.

This sequence belongs to the peptidase M20A family. DapE subfamily. Homodimer. Zn(2+) is required as a cofactor. Requires Co(2+) as cofactor.

The enzyme catalyses N-succinyl-(2S,6S)-2,6-diaminopimelate + H2O = (2S,6S)-2,6-diaminopimelate + succinate. It functions in the pathway amino-acid biosynthesis; L-lysine biosynthesis via DAP pathway; LL-2,6-diaminopimelate from (S)-tetrahydrodipicolinate (succinylase route): step 3/3. In terms of biological role, catalyzes the hydrolysis of N-succinyl-L,L-diaminopimelic acid (SDAP), forming succinate and LL-2,6-diaminopimelate (DAP), an intermediate involved in the bacterial biosynthesis of lysine and meso-diaminopimelic acid, an essential component of bacterial cell walls. This is Succinyl-diaminopimelate desuccinylase from Pseudomonas syringae pv. syringae (strain B728a).